The following is an 88-amino-acid chain: Small ribosomal subunit protein bS20 (88 aa).

The disordered stretch occupies residues 1-23 (MANSPQAKKRARQNDKARAHNAS).

It belongs to the bacterial ribosomal protein bS20 family.

Functionally, binds directly to 16S ribosomal RNA. The sequence is that of Small ribosomal subunit protein bS20 from Teredinibacter turnerae (strain ATCC 39867 / T7901).